The sequence spans 251 residues: Imidazole glycerol phosphate synthase subunit HisF (251 aa).

Active-site residues include D11 and D130.

Belongs to the HisA/HisF family. As to quaternary structure, heterodimer of HisH and HisF.

Its subcellular location is the cytoplasm. It catalyses the reaction 5-[(5-phospho-1-deoxy-D-ribulos-1-ylimino)methylamino]-1-(5-phospho-beta-D-ribosyl)imidazole-4-carboxamide + L-glutamine = D-erythro-1-(imidazol-4-yl)glycerol 3-phosphate + 5-amino-1-(5-phospho-beta-D-ribosyl)imidazole-4-carboxamide + L-glutamate + H(+). Its pathway is amino-acid biosynthesis; L-histidine biosynthesis; L-histidine from 5-phospho-alpha-D-ribose 1-diphosphate: step 5/9. Its function is as follows. IGPS catalyzes the conversion of PRFAR and glutamine to IGP, AICAR and glutamate. The HisF subunit catalyzes the cyclization activity that produces IGP and AICAR from PRFAR using the ammonia provided by the HisH subunit. This chain is Imidazole glycerol phosphate synthase subunit HisF, found in Chlorobium limicola (strain DSM 245 / NBRC 103803 / 6330).